The following is a 551-amino-acid chain: Tropolone cluster transcription factor tropK (551 aa).

Residues 1 to 21 (MSVAIKMSTNTVGGQSTRQPP) are disordered. Residues 7 to 20 (MSTNTVGGQSTRQP) are compositionally biased toward polar residues. The segment at residues 25–52 (CLHCRNKKMKCDALQPRCKNCFNAGVEC) is a DNA-binding region (zn(2)-C6 fungal-type).

The protein resides in the nucleus. Its function is as follows. Transcription factor that regulates the expression of the gene cluster that mediates the biosynthesis tropolone class of fungal maleic anhydrides, including stipitaldehydic, stipitatonic and stipitatic acids. This is Tropolone cluster transcription factor tropK from Talaromyces stipitatus (strain ATCC 10500 / CBS 375.48 / QM 6759 / NRRL 1006) (Penicillium stipitatum).